Consider the following 149-residue polypeptide: Transcriptional regulator MraZ (149 aa).

2 consecutive SpoVT-AbrB domains span residues 9 to 52 (AYSY…PRAQ) and 82 to 125 (AQEV…DRAR).

It belongs to the MraZ family. Forms oligomers.

Its subcellular location is the cytoplasm. The protein resides in the nucleoid. This Treponema pallidum subsp. pallidum (strain SS14) protein is Transcriptional regulator MraZ.